A 162-amino-acid polypeptide reads, in one-letter code: Dihydrofolate reductase (162 aa).

The DHFR domain maps to 3–161; it reads KITLIAACAE…TSYAFVHYLR (159 aa). Position 7-9 (7-9) interacts with substrate; it reads IAA. Residues 8-9 and 16-21 each bind NADP(+); these read AA and IGAGNA. Asp-29 serves as a coordination point for substrate. NADP(+) is bound at residue 45–48; it reads GRKT. Arg-60 is a substrate binding site. NADP(+) is bound by residues 65–68 and 98–103; these read ISRQ and MGGAQI. A substrate-binding site is contributed by Thr-117.

The protein belongs to the dihydrofolate reductase family.

The catalysed reaction is (6S)-5,6,7,8-tetrahydrofolate + NADP(+) = 7,8-dihydrofolate + NADPH + H(+). It participates in cofactor biosynthesis; tetrahydrofolate biosynthesis; 5,6,7,8-tetrahydrofolate from 7,8-dihydrofolate: step 1/1. Its function is as follows. Key enzyme in folate metabolism. Catalyzes an essential reaction for de novo glycine and purine synthesis, and for DNA precursor synthesis. The protein is Dihydrofolate reductase (folA) of Neisseria meningitidis serogroup A / serotype 4A (strain DSM 15465 / Z2491).